A 370-amino-acid chain; its full sequence is Heme A synthase (370 aa).

8 helical membrane passes run 15–35, 104–124, 129–149, 161–181, 200–220, 261–280, 293–313, and 317–337; these read VRIWLTLVAALIAVMVLVGGA, VIGIVYLLPFLWFLWRGAIGP, ALWIIFALGALQGAVGWWMVA, VRLATHLSLALIIYAAIVWTL, ALALLGLTFVQLYAGALVAGL, QFDHRMLAYALWTLAALHMI, GAVLLFLALTVQAALGIFTVL, and PIDLALAHQAMALVVLTLAVL. His-264 lines the heme pocket. His-324 is a binding site for heme.

The protein belongs to the COX15/CtaA family. Type 2 subfamily. Interacts with CtaB. Heme b is required as a cofactor.

Its subcellular location is the cell membrane. The enzyme catalyses Fe(II)-heme o + 2 A + H2O = Fe(II)-heme a + 2 AH2. It participates in porphyrin-containing compound metabolism; heme A biosynthesis; heme A from heme O: step 1/1. In terms of biological role, catalyzes the conversion of heme O to heme A by two successive hydroxylations of the methyl group at C8. The first hydroxylation forms heme I, the second hydroxylation results in an unstable dihydroxymethyl group, which spontaneously dehydrates, resulting in the formyl group of heme A. The sequence is that of Heme A synthase from Rhodopseudomonas palustris (strain TIE-1).